A 214-amino-acid polypeptide reads, in one-letter code: Adenylate kinase (214 aa).

10 to 15 provides a ligand contact to ATP; sequence GAGKGT. The NMP stretch occupies residues 30–59; the sequence is STGDMLRAAIKEGTPLGLEAKKVMDAGQLI. AMP contacts are provided by residues T31, R36, 57-59, 85-88, and Q92; these read QLI and GFPR. Residues 122–159 are LID; sequence GRRVHPGSGRVYHVVYNPPKVADKDNETGEELIIRADD. Residues R123 and 132 to 133 each bind ATP; that span reads VY. Positions 156 and 167 each coordinate AMP. Q200 contacts ATP.

It belongs to the adenylate kinase family. In terms of assembly, monomer.

The protein resides in the cytoplasm. It carries out the reaction AMP + ATP = 2 ADP. It functions in the pathway purine metabolism; AMP biosynthesis via salvage pathway; AMP from ADP: step 1/1. Functionally, catalyzes the reversible transfer of the terminal phosphate group between ATP and AMP. Plays an important role in cellular energy homeostasis and in adenine nucleotide metabolism. The protein is Adenylate kinase of Pseudoalteromonas translucida (strain TAC 125).